A 786-amino-acid polypeptide reads, in one-letter code: AT-rich interactive domain-containing protein 3 (786 aa).

Low complexity predominate over residues 1–16; sequence MENLTEIESTMESLTE. 3 disordered regions span residues 1-182, 199-251, and 395-420; these read MENL…HHAD, SGDH…IPAN, and DTTV…NSSA. Composition is skewed to basic and acidic residues over residues 18–64 and 87–97; these read ESER…HEDS and DLPKIDDEKNS. Low complexity predominate over residues 130–139; the sequence is ENIVSSEVSS. 5 stretches are compositionally biased toward basic and acidic residues: residues 141-156, 169-182, 199-219, 234-248, and 402-416; these read ILKD…RDTA, KLSE…HHAD, SGDH…ENQS, AEER…HKEI, and NNKD…ERQD. Residues 494-585 enclose the ARID domain; sequence EEDQSAFMKE…ALLEYERHKV (92 aa). The disordered stretch occupies residues 606–638; it reads QASGSGRARRDAASRAMQGWHSQRLNGNGEVSD. The sHSP domain maps to 686-786; that stretch reads VTVVDVGPPA…FVRVPLEQLE (101 aa).

The protein belongs to the small heat shock protein (HSP20) family.

The protein localises to the nucleus. In Arabidopsis thaliana (Mouse-ear cress), this protein is AT-rich interactive domain-containing protein 3 (ARID3).